We begin with the raw amino-acid sequence, 579 residues long: A-type ATP synthase subunit A (579 aa).

229–236 (GPFGSGKT) provides a ligand contact to ATP.

Belongs to the ATPase alpha/beta chains family. In terms of assembly, has multiple subunits with at least A(3), B(3), C, D, E, F, H, I and proteolipid K(x).

Its subcellular location is the cell membrane. The enzyme catalyses ATP + H2O + 4 H(+)(in) = ADP + phosphate + 5 H(+)(out). Component of the A-type ATP synthase that produces ATP from ADP in the presence of a proton gradient across the membrane. The A chain is the catalytic subunit. This is A-type ATP synthase subunit A from Methanocella arvoryzae (strain DSM 22066 / NBRC 105507 / MRE50).